Reading from the N-terminus, the 594-residue chain is ATP-dependent lipid A-core flippase (594 aa).

6 helical membrane passes run 35–55 (FVLA…IPKV), 64–84 (FGGS…GVAL), 135–155 (AVIF…ITLV), 161–181 (VVAL…VVAV), 262–282 (VTAF…MIQA), and 289–309 (IGGF…LKHL). Residues 36–318 (VLAIIAMGLV…LADLNQPLQR (283 aa)) form the ABC transmembrane type-1 domain. An ABC transporter domain is found at 350–588 (LVFDNVGFRY…NGLYAGLHRI (239 aa)). 384–391 (GPSGSGKT) is a binding site for ATP.

It belongs to the ABC transporter superfamily. Lipid exporter (TC 3.A.1.106) family. As to quaternary structure, homodimer.

It localises to the cell inner membrane. The catalysed reaction is ATP + H2O + lipid A-core oligosaccharideSide 1 = ADP + phosphate + lipid A-core oligosaccharideSide 2.. In terms of biological role, involved in lipopolysaccharide (LPS) biosynthesis. Translocates lipid A-core from the inner to the outer leaflet of the inner membrane. Transmembrane domains (TMD) form a pore in the inner membrane and the ATP-binding domain (NBD) is responsible for energy generation. The polypeptide is ATP-dependent lipid A-core flippase (Cupriavidus metallidurans (strain ATCC 43123 / DSM 2839 / NBRC 102507 / CH34) (Ralstonia metallidurans)).